A 403-amino-acid polypeptide reads, in one-letter code: S-adenosylmethionine synthase (403 aa).

H15 is an ATP binding site. D17 contacts Mg(2+). Position 43 (E43) interacts with K(+). The L-methionine site is built by E56 and Q99. A flexible loop region spans residues 99–109 (QSPDINQGVDR). ATP is bound by residues 166 to 168 (DAK), 232 to 233 (KF), D241, 247 to 248 (RK), A264, and K268. Position 241 (D241) interacts with L-methionine. Residue K272 coordinates L-methionine.

This sequence belongs to the AdoMet synthase family. Homotetramer; dimer of dimers. Mg(2+) is required as a cofactor. Requires K(+) as cofactor.

It is found in the cytoplasm. The catalysed reaction is L-methionine + ATP + H2O = S-adenosyl-L-methionine + phosphate + diphosphate. It functions in the pathway amino-acid biosynthesis; S-adenosyl-L-methionine biosynthesis; S-adenosyl-L-methionine from L-methionine: step 1/1. Catalyzes the formation of S-adenosylmethionine (AdoMet) from methionine and ATP. The overall synthetic reaction is composed of two sequential steps, AdoMet formation and the subsequent tripolyphosphate hydrolysis which occurs prior to release of AdoMet from the enzyme. The protein is S-adenosylmethionine synthase of Xylella fastidiosa (strain M12).